Here is a 311-residue protein sequence, read N- to C-terminus: Glutaminase (311 aa).

Ser-66, Asn-116, Glu-162, Asn-169, Tyr-193, Tyr-245, and Val-263 together coordinate substrate.

The protein belongs to the glutaminase family. Homotetramer.

It catalyses the reaction L-glutamine + H2O = L-glutamate + NH4(+). This Rhodopseudomonas palustris (strain ATCC BAA-98 / CGA009) protein is Glutaminase.